A 254-amino-acid chain; its full sequence is DNA repair protein RecO (254 aa).

The protein belongs to the RecO family.

Involved in DNA repair and RecF pathway recombination. This is DNA repair protein RecO from Gluconacetobacter diazotrophicus (strain ATCC 49037 / DSM 5601 / CCUG 37298 / CIP 103539 / LMG 7603 / PAl5).